Consider the following 334-residue polypeptide: AA9 family lytic polysaccharide monooxygenase A (334 aa).

An N-terminal signal peptide occupies residues 1–22; that stretch reads MSPSFKSTAILGAVALAARVRA. The Cu(2+) site is built by His-23 and His-108. Cystine bridges form between Cys-78-Cys-200 and Cys-119-Cys-123. The N-linked (GlcNAc...) asparagine glycan is linked to Asn-160. His-186 and Gln-195 together coordinate O2. Tyr-197 lines the Cu(2+) pocket. Asn-208 is a glycosylation site (N-linked (GlcNAc...) asparagine). Residues 244–304 form a disordered region; the sequence is GPALYTGGSS…PSPSLPVEIP (61 aa). Positions 249–265 are enriched in low complexity; the sequence is TGGSSPSPNPPTSTQSP.

Belongs to the polysaccharide monooxygenase AA9 family. Cu(2+) is required as a cofactor.

Its subcellular location is the secreted. It carries out the reaction [(1-&gt;4)-beta-D-glucosyl]n+m + reduced acceptor + O2 = 4-dehydro-beta-D-glucosyl-[(1-&gt;4)-beta-D-glucosyl]n-1 + [(1-&gt;4)-beta-D-glucosyl]m + acceptor + H2O.. In terms of biological role, lytic polysaccharide monooxygenase (LPMO) that depolymerizes crystalline and amorphous polysaccharides via the oxidation of scissile alpha- or beta-(1-4)-glycosidic bonds, yielding C1 or C4 oxidation products. Catalysis by LPMOs requires the reduction of the active-site copper from Cu(II) to Cu(I) by a reducing agent and H(2)O(2) or O(2) as a cosubstrate. Active on hemicelluloses, including xylan, glucomannan, and xyloglucan. Shows clear activity on cellooligosaccharides, generating C4 oxidation products. Also displays activity on konjac glucomannan (KGM), a linear beta-1,4-linked mannan with randomly distributed glucosyl residues; as well as trace activity on lichenan, a linear beta-1,3-beta-1,4-glucan with a 1:2 ratio of beta-1,3 to beta-1,4 linkages. Has no activity on ivory nut mannan (INM), a linear beta-1,4-linked mannan without substitutions. The protein is AA9 family lytic polysaccharide monooxygenase A of Malbranchea cinnamomea (Thermophilic fungus).